Consider the following 467-residue polypeptide: MSEPNGWVELDVPEPDAEEFTGPQPVVAVVGRPNVGKSTLVNRLIGRRQAVVEDVPGVTRDRVPYDAQWNGRQFAVVDTGGWEPDAKDRAAAIAAQAETAVTTADVVLFVVDAVVGATDVDESAVKMLRRSAKPVILVANKADNSSIEMEAATLWSLGLGEPYPVSALHGRGSGELLDVIMDRLPEAPKIIEDRPRGPRRVALVGRPNVGKSSLLNRFSGEVRAVVDAVAGTTVDPVDSLVEIGGEAWQLVDTAGLRKRVGKASGTEYYASLRTASAIEAAEVAVVLLDASEVISEQDQRILSMVTDAGRALVIAFNKWDLVDADRRYYLDREIERELRRIPWAIRLNLSAKTGRAVDKLAPALRKALASWETRVPTAQLNAWLTALVQATPHPVRGGRAPKILFATQAGAAPPRFVLFTSGPLDAGYQRFVERKLREEFGFEGSPIEIAVRPRKKVGPGGRGKAHG.

2 EngA-type G domains span residues 25 to 188 (PVVA…PEAP) and 199 to 372 (RRVA…ASWE). GTP-binding positions include 31–38 (GRPNVGKS), 78–82 (DTGGW), 140–143 (NKAD), 205–212 (GRPNVGKS), 252–256 (DTAGL), and 317–320 (NKWD). Residues 373 to 455 (TRVPTAQLNA…PIEIAVRPRK (83 aa)) enclose the KH-like domain.

This sequence belongs to the TRAFAC class TrmE-Era-EngA-EngB-Septin-like GTPase superfamily. EngA (Der) GTPase family. As to quaternary structure, associates with the 50S ribosomal subunit.

Its function is as follows. GTPase that plays an essential role in the late steps of ribosome biogenesis. The chain is GTPase Der from Salinispora arenicola (strain CNS-205).